Consider the following 316-residue polypeptide: Beta-ketoacyl-[acyl-carrier-protein] synthase III (316 aa).

Catalysis depends on residues C112 and H243. An ACP-binding region spans residues 244-248 (QANLR). N273 is a catalytic residue.

This sequence belongs to the thiolase-like superfamily. FabH family. As to quaternary structure, homodimer.

It localises to the cytoplasm. It catalyses the reaction malonyl-[ACP] + acetyl-CoA + H(+) = 3-oxobutanoyl-[ACP] + CO2 + CoA. It participates in lipid metabolism; fatty acid biosynthesis. Catalyzes the condensation reaction of fatty acid synthesis by the addition to an acyl acceptor of two carbons from malonyl-ACP. Catalyzes the first condensation reaction which initiates fatty acid synthesis and may therefore play a role in governing the total rate of fatty acid production. Possesses both acetoacetyl-ACP synthase and acetyl transacylase activities. Its substrate specificity determines the biosynthesis of branched-chain and/or straight-chain of fatty acids. The protein is Beta-ketoacyl-[acyl-carrier-protein] synthase III of Histophilus somni (strain 129Pt) (Haemophilus somnus).